A 533-amino-acid chain; its full sequence is L-aspartate oxidase (533 aa).

FAD-binding positions include 16-19 (SGAA), lysine 38, 45-52 (ATFYAQGG), and aspartate 223. The active-site Proton donor/acceptor is arginine 290. FAD-binding positions include glutamate 375 and 391 to 392 (SL).

The protein belongs to the FAD-dependent oxidoreductase 2 family. NadB subfamily. FAD serves as cofactor.

Its subcellular location is the cytoplasm. The catalysed reaction is L-aspartate + O2 = iminosuccinate + H2O2. It participates in cofactor biosynthesis; NAD(+) biosynthesis; iminoaspartate from L-aspartate (oxidase route): step 1/1. Catalyzes the oxidation of L-aspartate to iminoaspartate, the first step in the de novo biosynthesis of NAD(+). In Yersinia pestis, this protein is L-aspartate oxidase (nadB).